Reading from the N-terminus, the 682-residue chain is Potassium-transporting ATPase ATP-binding subunit (682 aa).

The next 4 membrane-spanning stretches (helical) occupy residues 34–54 (PVMF…IAMA), 62–82 (ALFS…ANFA), 219–239 (IALT…TATL), and 254–274 (VLVA…LSAI). D307 acts as the 4-aspartylphosphate intermediate in catalysis. Residues D344, E348, 377 to 384 (FTAQSRMS), and K395 each bind ATP. Residues D518 and D522 each contribute to the Mg(2+) site. A run of 3 helical transmembrane segments spans residues 588–608 (FAII…LNIM), 616–636 (AILS…PLAL), and 662–682 (LLVP…CGLV).

The protein belongs to the cation transport ATPase (P-type) (TC 3.A.3) family. Type IA subfamily. The system is composed of three essential subunits: KdpA, KdpB and KdpC.

It localises to the cell inner membrane. The enzyme catalyses K(+)(out) + ATP + H2O = K(+)(in) + ADP + phosphate + H(+). Its function is as follows. Part of the high-affinity ATP-driven potassium transport (or Kdp) system, which catalyzes the hydrolysis of ATP coupled with the electrogenic transport of potassium into the cytoplasm. This subunit is responsible for energy coupling to the transport system and for the release of the potassium ions to the cytoplasm. The protein is Potassium-transporting ATPase ATP-binding subunit of Escherichia coli O81 (strain ED1a).